A 143-amino-acid chain; its full sequence is Ribosome maturation factor RimP (143 aa).

It belongs to the RimP family.

The protein localises to the cytoplasm. Functionally, required for maturation of 30S ribosomal subunits. The protein is Ribosome maturation factor RimP of Neisseria gonorrhoeae (strain ATCC 700825 / FA 1090).